We begin with the raw amino-acid sequence, 132 residues long: Agouti-signaling protein (132 aa).

Positions 1-22 (MDVTRLLLATLLVFLCFFTAYS) are cleaved as a signal peptide. Residue Asn-39 is glycosylated (N-linked (GlcNAc...) asparagine). The segment at 61–87 (QISRKEAEKKRSSKKEASMKKVARPRT) is disordered. A compositionally biased stretch (basic and acidic residues) spans 63–79 (SRKEAEKKRSSKKEASM). 5 disulfides stabilise this stretch: Cys-93/Cys-108, Cys-100/Cys-114, Cys-107/Cys-125, Cys-111/Cys-132, and Cys-116/Cys-123. The region spanning 93-132 (CVATRDSCKPPAPACCDPCASCQCRFFRSACSCRVLSLNC) is the Agouti domain.

The protein resides in the secreted. Involved in the regulation of melanogenesis. The binding of ASP to MC1R precludes alpha-MSH initiated signaling and thus blocks production of cAMP, leading to a down-regulation of eumelanogenesis (brown/black pigment) and thus increasing synthesis of pheomelanin (yellow/red pigment). In Macaca maura (Moor macaque), this protein is Agouti-signaling protein (ASIP).